Consider the following 737-residue polypeptide: Methylcrotonoyl-CoA carboxylase subunit alpha, mitochondrial (737 aa).

The transit peptide at methionine 1–alanine 33 directs the protein to the mitochondrion. The region spanning alanine 38 to asparagine 485 is the Biotin carboxylation domain. ATP contacts are provided by residues lysine 153, alanine 185–isoleucine 246, glutamate 237, and histidine 272. In terms of domain architecture, ATP-grasp spans lysine 157–asparagine 355. Mn(2+) contacts are provided by glutamate 312, glutamate 326, and asparagine 328. Arginine 330 is a catalytic residue. The interval tyrosine 636–serine 665 is disordered. The span at aspartate 647 to glutamate 657 shows a compositional bias: low complexity. The region spanning serine 656–lysine 732 is the Biotinyl-binding domain. Lysine 698 is subject to N6-biotinyllysine.

As to quaternary structure, probably a heterodimer composed of biotin-containing alpha subunits and beta subunits. It depends on biotin as a cofactor. The cofactor is Mn(2+).

It is found in the mitochondrion matrix. The catalysed reaction is 3-methylbut-2-enoyl-CoA + hydrogencarbonate + ATP = 3-methyl-(2E)-glutaconyl-CoA + ADP + phosphate + H(+). Its pathway is amino-acid degradation; L-leucine degradation; (S)-3-hydroxy-3-methylglutaryl-CoA from 3-isovaleryl-CoA: step 2/3. Its function is as follows. Biotin-attachment subunit of the 3-methylcrotonyl-CoA carboxylase, an enzyme that catalyzes the conversion of 3-methylcrotonyl-CoA to 3-methylglutaconyl-CoA, a critical step for leucine and isovaleric acid catabolism. In Oryza sativa subsp. japonica (Rice), this protein is Methylcrotonoyl-CoA carboxylase subunit alpha, mitochondrial (MCCA).